The following is a 524-amino-acid chain: GMP synthase [glutamine-hydrolyzing] (524 aa).

Positions 8–206 constitute a Glutamine amidotransferase type-1 domain; sequence RILILDFGSQ…IYDICGCEAL (199 aa). Cys-85 serves as the catalytic Nucleophile. Catalysis depends on residues His-180 and Glu-182. The 193-residue stretch at 207 to 399 folds into the GMPS ATP-PPase domain; the sequence is WEPRHIIAKS…LGLPFELVYR (193 aa). 234–240 provides a ligand contact to ATP; sequence SGGVDSS.

In terms of assembly, homodimer.

It catalyses the reaction XMP + L-glutamine + ATP + H2O = GMP + L-glutamate + AMP + diphosphate + 2 H(+). Its pathway is purine metabolism; GMP biosynthesis; GMP from XMP (L-Gln route): step 1/1. Its function is as follows. Catalyzes the synthesis of GMP from XMP. The protein is GMP synthase [glutamine-hydrolyzing] of Nitrosococcus oceani (strain ATCC 19707 / BCRC 17464 / JCM 30415 / NCIMB 11848 / C-107).